The following is a 310-amino-acid chain: Glutamyl-Q tRNA(Asp) synthetase (310 aa).

L-glutamate is bound by residues 8-12 (RFAPS) and Glu44. Positions 11–21 (PSPTGPLHLGS) match the 'HIGH' region motif. Cys100, Cys102, Tyr123, and Cys127 together coordinate Zn(2+). Residues Tyr183 and Arg201 each coordinate L-glutamate. Residues 239-243 (KLSKQ) carry the 'KMSKS' region motif. Position 242 (Lys242) interacts with ATP.

This sequence belongs to the class-I aminoacyl-tRNA synthetase family. GluQ subfamily. Requires Zn(2+) as cofactor.

Functionally, catalyzes the tRNA-independent activation of glutamate in presence of ATP and the subsequent transfer of glutamate onto a tRNA(Asp). Glutamate is transferred on the 2-amino-5-(4,5-dihydroxy-2-cyclopenten-1-yl) moiety of the queuosine in the wobble position of the QUC anticodon. The sequence is that of Glutamyl-Q tRNA(Asp) synthetase from Cupriavidus metallidurans (strain ATCC 43123 / DSM 2839 / NBRC 102507 / CH34) (Ralstonia metallidurans).